A 245-amino-acid polypeptide reads, in one-letter code: Orotidine 5'-phosphate decarboxylase (245 aa).

Substrate is bound by residues D22, K44, 71–80 (DLKFHDIPNT), T131, R192, Q201, G221, and R222. The Proton donor role is filled by K73.

This sequence belongs to the OMP decarboxylase family. Type 1 subfamily. In terms of assembly, homodimer.

The catalysed reaction is orotidine 5'-phosphate + H(+) = UMP + CO2. It participates in pyrimidine metabolism; UMP biosynthesis via de novo pathway; UMP from orotate: step 2/2. Catalyzes the decarboxylation of orotidine 5'-monophosphate (OMP) to uridine 5'-monophosphate (UMP). The polypeptide is Orotidine 5'-phosphate decarboxylase (Salmonella choleraesuis (strain SC-B67)).